We begin with the raw amino-acid sequence, 302 residues long: 4-hydroxy-tetrahydrodipicolinate synthase (302 aa).

Residue Thr-55 coordinates pyruvate. The active-site Proton donor/acceptor is the Tyr-144. Catalysis depends on Lys-172, which acts as the Schiff-base intermediate with substrate. Val-214 is a pyruvate binding site.

The protein belongs to the DapA family. As to quaternary structure, homotetramer; dimer of dimers.

The protein resides in the cytoplasm. The catalysed reaction is L-aspartate 4-semialdehyde + pyruvate = (2S,4S)-4-hydroxy-2,3,4,5-tetrahydrodipicolinate + H2O + H(+). The protein operates within amino-acid biosynthesis; L-lysine biosynthesis via DAP pathway; (S)-tetrahydrodipicolinate from L-aspartate: step 3/4. Its function is as follows. Catalyzes the condensation of (S)-aspartate-beta-semialdehyde [(S)-ASA] and pyruvate to 4-hydroxy-tetrahydrodipicolinate (HTPA). This is 4-hydroxy-tetrahydrodipicolinate synthase from Synechococcus sp. (strain CC9605).